A 381-amino-acid polypeptide reads, in one-letter code: YVPKLEEERIVIYSTMDRADLAEHRLEAICAAMIESWGYSELTHQIRRFYSWLLQQQPFASIAQEGKAPYIASMALRKLYMDRAVDEEELRVFTEMMVALDDEFECDSYEVHHQANDTIDTGGNSKKDVKPEQGSIQPSSNKGKEKDVNAGTSGTHTVPRIKAITAKMRMPKSKGAAVLKLDHLLEYAPQQIDISNTRATQSQFDTWYEAVRVAYDIGETEMPTVMNGLMVWCIENGTSPNINGVWVMMDGSEQVEYPLKPIVENAKPTLRQIMAHFSDVAEAYIEMRNKKEPYMPRYGLVRNLRDASLARYAFDFYEVTSRTPVRAREAHIQMKAAALKSAQSRLFGLDGGVSTQEENTERHTTEDVSPSMHTLLGVKNM.

Residues 115–155 (ANDTIDTGGNSKKDVKPEQGSIQPSSNKGKEKDVNAGTSGT) form a disordered region.

It belongs to the potyviridae genome polyprotein family. Genome polyprotein of potyviruses undergoes post-translational proteolytic processing by the main proteinase NIa-pro resulting in the production of at least ten individual proteins. The P1 proteinase and the HC-pro cleave only their respective C-termini autocatalytically. 6K1 is essential for proper proteolytic separation of P3 from CI.

It is found in the virion. It carries out the reaction RNA(n) + a ribonucleoside 5'-triphosphate = RNA(n+1) + diphosphate. An RNA-dependent RNA polymerase that plays an essential role in the virus replication. In terms of biological role, involved in aphid transmission, cell-to-cell and systemis movement, encapsidation of the viral RNA and in the regulation of viral RNA amplification. The protein is Genome polyprotein of Capsicum annuum (Capsicum pepper).